The primary structure comprises 342 residues: Cystein proteinase inhibitor protein salarin (342 aa).

Positions 1 to 19 are cleaved as a signal peptide; that stretch reads MKSLVLLLLVAVTVSSVVS. N-linked (GlcNAc) asparagine glycosylation is present at Asn153. O-linked (GlcNAc) threonine glycosylation occurs at Thr184.

Post-translationally, N-glycosylated, with sialylated biantennary complex-type glycans. In terms of processing, O-glycosylated, with sialylated oligosaccharides. As to expression, expressed in the skin, liver. intestine, spleen, pancreas and kidney.

Its subcellular location is the cytoplasm. The protein localises to the vacuole. Functionally, inhibits papain and ficin (cysteine proteinases) but not trypsin (a serine proteinase). The protein is Cystein proteinase inhibitor protein salarin (salarin) of Salmo salar (Atlantic salmon).